The sequence spans 376 residues: Heat stress transcription factor A-2a (376 aa).

The segment at 137–168 (LKTIKRRRPPPSSPPSSSSSSSSSQHQQQPAA) is disordered. Positions 151–160 (PSSSSSSSSS) are enriched in low complexity. The stretch at 182 to 229 (VNRLQRDKSVLIAEVVKLRQEQQTTRAQMQAMEERISAAEQKQQQMTV) forms a coiled coil. The segment at 185-235 (LQRDKSVLIAEVVKLRQEQQTTRAQMQAMEERISAAEQKQQQMTVFLARAM) is hydrophobic repeat HR-A/B. The Nuclear localization signal motif lies at 265-269 (KKRRR). 2 disordered regions span residues 296–319 (VAEP…DTES) and 332–362 (KQRE…DDDD). Over residues 307 to 316 (GDGGGGGGGD) the composition is skewed to gly residues. Residues 318–325 (ESFWMQLL) carry the AHA motif. The segment covering 352–362 (VDNDEEDDDDD) has biased composition (acidic residues). The Nuclear export signal signature appears at 366–373 (LVQSIYHL).

The protein belongs to the HSF family. Class A subfamily. In terms of assembly, homotrimer. Exhibits temperature-dependent phosphorylation.

The protein resides in the cytoplasm. It is found in the nucleus. Its function is as follows. Transcriptional regulator that specifically binds DNA of heat shock promoter elements (HSE). In Oryza sativa subsp. japonica (Rice), this protein is Heat stress transcription factor A-2a (HSFA2A).